The chain runs to 259 residues: Enkurin (259 aa).

Disordered regions lie at residues 1-26 (MVAMDPTGPSESIYNLIPSDWKEPPQ) and 76-98 (PPKKKFEWNERRKPPVPLRTDHP). The span at 76 to 88 (PPKKKFEWNERRK) shows a compositional bias: basic and acidic residues. The SH3-binding signature appears at 86–92 (RRKPPVP). The Enkurin domain occupies 163–255 (KRNEEVKKAQ…VLEKHKVIYI (93 aa)). Residues 163–258 (KRNEEVKKAQ…KHKVIYIANK (96 aa)) are interaction with TRPC proteins. Positions 179 to 190 (IQENLRKAAMKR) constitute an IQ domain.

In terms of assembly, microtubule inner protein component of sperm flagellar doublet microtubules. Binds calmodulin via its IQ domain. Interacts with TRPC1, TRPC2, TRPC5, but not TRPC3. Interacts with CFAP45. Expressed in trachea multiciliated cells.

The protein resides in the cytoplasm. Its subcellular location is the cytoskeleton. The protein localises to the flagellum axoneme. It is found in the cilium axoneme. Its function is as follows. Adapter that functions to localize a calcium-sensitive signal transduction machinery in sperm to a calcium-permeable ion channel. Microtubule inner protein (MIP) part of the dynein-decorated doublet microtubules (DMTs) in cilia axoneme, which is required for motile cilia beating. The protein is Enkurin (ENKUR) of Bos taurus (Bovine).